The sequence spans 555 residues: 4-coumarate--CoA ligase-like 9 (555 aa).

ATP contacts are provided by Ser-200, Ser-201, Gly-202, Thr-203, Thr-204, and Lys-208. Tyr-248 lines the (E)-4-coumaroyl-AMP pocket. Arg-269 serves as a coordination point for CoA. An SBD1 region spans residues Asp-271–Glu-342. Ala-320 is a (E)-4-coumaroyl-AMP binding site. 5 residues coordinate ATP: Glu-342, Ala-343, Thr-347, Asp-431, and Arg-446. Residues Ala-343 and Thr-347 each coordinate (E)-4-coumaroyl-AMP. The SBD2 stretch occupies residues Ala-343–Tyr-410. 2 residues coordinate (E)-4-coumaroyl-AMP: Lys-448 and Lys-452. Lys-454 and Gly-455 together coordinate CoA. Lys-537 is a binding site for ATP.

This sequence belongs to the ATP-dependent AMP-binding enzyme family. In terms of assembly, interacts with STS1. Requires Mg(2+) as cofactor.

It catalyses the reaction (E)-4-coumarate + ATP + CoA = (E)-4-coumaroyl-CoA + AMP + diphosphate. It carries out the reaction (E)-4-coumarate + ATP + H(+) = (E)-4-coumaroyl-AMP + diphosphate. The catalysed reaction is (E)-4-coumaroyl-AMP + CoA = (E)-4-coumaroyl-CoA + AMP + H(+). Its function is as follows. Carboxylate--CoA ligase that may use 4-coumarate as substrate. Follows a two-step reaction mechanism, wherein the carboxylate substrate first undergoes adenylation by ATP, followed by a thioesterification in the presence of CoA to yield the final CoA thioester. In Oryza sativa subsp. japonica (Rice), this protein is 4-coumarate--CoA ligase-like 9 (4CLL9).